A 332-amino-acid chain; its full sequence is Fructose-1,6-bisphosphatase class 1 (332 aa).

The Mg(2+) site is built by glutamate 89, aspartate 110, leucine 112, and aspartate 113. Residues 113–116 (DGSS), asparagine 206, tyrosine 239, 257–259 (YLY), and lysine 269 contribute to the substrate site. Residue glutamate 275 participates in Mg(2+) binding.

It belongs to the FBPase class 1 family. As to quaternary structure, homotetramer. Requires Mg(2+) as cofactor.

The protein localises to the cytoplasm. The enzyme catalyses beta-D-fructose 1,6-bisphosphate + H2O = beta-D-fructose 6-phosphate + phosphate. Its pathway is carbohydrate biosynthesis; gluconeogenesis. This chain is Fructose-1,6-bisphosphatase class 1, found in Enterobacter sp. (strain 638).